Consider the following 189-residue polypeptide: Development-specific protein LVN1.2 (189 aa).

As to expression, endoderm cells.

The protein is Development-specific protein LVN1.2 of Lytechinus variegatus (Green sea urchin).